A 123-amino-acid chain; its full sequence is cAMP-responsive element-binding protein-like 2 (123 aa).

The interval methionine 1–isoleucine 24 is disordered. The segment covering lysine 10 to proline 21 has biased composition (basic residues). A bZIP domain is found at lysine 23–serine 86. Residues lysine 29–arginine 60 form a basic motif region. Positions isoleucine 62–leucine 69 are leucine-zipper. Residues leucine 92 to asparagine 123 are disordered. Positions aspartate 114–asparagine 123 are enriched in polar residues.

This sequence belongs to the bZIP family. ATF subfamily. In terms of assembly, interacts with CREB1; regulates CREB1 phosphorylation, stability and transcriptional activity. Phosphorylated by AMPK. Widely expressed with higher expression in adipose tissue, skeletal muscle, and liver (at protein level).

It is found in the nucleus. In terms of biological role, probable regulator of CREB1 transcriptional activity which is involved in adipose cells differentiation. May also play a regulatory role in the cell cycle. This chain is cAMP-responsive element-binding protein-like 2 (Crebl2), found in Mus musculus (Mouse).